Reading from the N-terminus, the 425-residue chain is Glutamyl-tRNA(Gln) amidotransferase subunit A (425 aa).

Catalysis depends on charge relay system residues K29 and S104. S128 acts as the Acyl-ester intermediate in catalysis.

Belongs to the amidase family. GatA subfamily. Heterotrimer of A, B and C subunits.

It carries out the reaction L-glutamyl-tRNA(Gln) + L-glutamine + ATP + H2O = L-glutaminyl-tRNA(Gln) + L-glutamate + ADP + phosphate + H(+). Allows the formation of correctly charged Gln-tRNA(Gln) through the transamidation of misacylated Glu-tRNA(Gln) in organisms which lack glutaminyl-tRNA synthetase. The reaction takes place in the presence of glutamine and ATP through an activated gamma-phospho-Glu-tRNA(Gln). The protein is Glutamyl-tRNA(Gln) amidotransferase subunit A of Haloarcula marismortui (strain ATCC 43049 / DSM 3752 / JCM 8966 / VKM B-1809) (Halobacterium marismortui).